The primary structure comprises 360 residues: Chorismate synthase (360 aa).

Positions 48 and 54 each coordinate NADP(+). Residues Arg-125–Ser-127, Asn-242–Gly-243, Gly-283, Lys-298–Ser-302, and Arg-324 each bind FMN.

Belongs to the chorismate synthase family. Homotetramer. FMNH2 is required as a cofactor.

The enzyme catalyses 5-O-(1-carboxyvinyl)-3-phosphoshikimate = chorismate + phosphate. Its pathway is metabolic intermediate biosynthesis; chorismate biosynthesis; chorismate from D-erythrose 4-phosphate and phosphoenolpyruvate: step 7/7. Its function is as follows. Catalyzes the anti-1,4-elimination of the C-3 phosphate and the C-6 proR hydrogen from 5-enolpyruvylshikimate-3-phosphate (EPSP) to yield chorismate, which is the branch point compound that serves as the starting substrate for the three terminal pathways of aromatic amino acid biosynthesis. This reaction introduces a second double bond into the aromatic ring system. This Gluconobacter oxydans (strain 621H) (Gluconobacter suboxydans) protein is Chorismate synthase.